A 505-amino-acid polypeptide reads, in one-letter code: Pup deamidase/depupylase (505 aa).

Residue 6–10 (GTEVE) participates in ATP binding. 2 residues coordinate Mg(2+): Glu8 and Tyr93. Residue Asp95 is the Proton acceptor of the active site. Glu100 lines the Mg(2+) pocket. 102 to 103 (SA) contributes to the ATP binding site. Position 156 (His156) interacts with Mg(2+). Residues Asn158 and Arg240 each contribute to the ATP site. Mg(2+) is bound at residue His242.

It belongs to the Pup ligase/Pup deamidase family. Pup deamidase subfamily. In terms of assembly, interacts with the prokaryotic ubiquitin-like protein Pup. It depends on ATP as a cofactor.

It catalyses the reaction [prokaryotic ubiquitin-like protein]-C-terminal-L-glutamine + H2O = [prokaryotic ubiquitin-like protein]-C-terminal-L-glutamate + NH4(+). It participates in protein degradation; proteasomal Pup-dependent pathway. Functionally, specifically catalyzes the deamidation of the C-terminal glutamine of the prokaryotic ubiquitin-like protein Pup to glutamate, thereby rendering Pup competent for conjugation. Also displays depupylase (DPUP) activity, removing conjugated Pup from target proteins; is thus involved in the recycling of Pup and may function similarly to deubiquitinases (DUBs) in eukaryotes to prevent or promote proteasomal degradation of certain proteins. This is Pup deamidase/depupylase (dop) from Mycobacterium tuberculosis (strain CDC 1551 / Oshkosh).